Reading from the N-terminus, the 135-residue chain is CDGSH iron-sulfur domain-containing protein 2B (135 aa).

The Lumenal portion of the chain corresponds to M1–E37. The helical transmembrane segment at W38–L60 threads the bilayer. The Cytoplasmic segment spans residues P61–V135. C99, C101, C110, and H114 together coordinate [2Fe-2S] cluster.

Belongs to the CISD protein family. CISD2 subfamily. Homodimer. The cofactor is [2Fe-2S] cluster.

It is found in the endoplasmic reticulum membrane. Its subcellular location is the mitochondrion outer membrane. Functionally, regulator of autophagy that contributes to antagonize becn1-mediated cellular autophagy at the endoplasmic reticulum. Participates in the interaction of bcl2 with becn1 and is required for bcl2-mediated depression of endoplasmic reticulum Ca(2+) stores during autophagy. This chain is CDGSH iron-sulfur domain-containing protein 2B (cisd2-b), found in Xenopus laevis (African clawed frog).